Consider the following 1228-residue polypeptide: Clustered mitochondria protein homolog (1228 aa).

The Clu domain occupies 298–557 (PSSLPSNSID…DNNPLDVGFA (260 aa)). One copy of the TPR 1 repeat lies at 486–519 (CYGFDEASNKVIADAEFGSSLDDFAKVFHLKKHE). A coiled-coil region spans residues 671-702 (LGRVIELAEQELEAQRALREAHLQQVEADNKE). TPR repeat units lie at residues 982–1015 (AESYLALSTIHSKLEKKSEAVALCRKACAIYERV) and 1108–1141 (AVNESRLANLYASVGEYKRSLACIESCYELFSKE).

It belongs to the CLU family. In terms of assembly, may associate with the eukaryotic translation initiation factor 3 (eIF-3) complex.

It is found in the cytoplasm. Its function is as follows. mRNA-binding protein involved in proper cytoplasmic distribution of mitochondria. The chain is Clustered mitochondria protein homolog from Eremothecium gossypii (strain ATCC 10895 / CBS 109.51 / FGSC 9923 / NRRL Y-1056) (Yeast).